We begin with the raw amino-acid sequence, 1253 residues long: Elongator complex protein 1 (1253 aa).

The tract at residues V830 to I1253 is mediates dimerization. Residues Y1126–K1141 show a composition bias toward polar residues. The disordered stretch occupies residues Y1126–G1153. The interval R1137–K1155 is required for binding to tRNA. The segment covering N1142 to G1153 has biased composition (basic residues).

This sequence belongs to the ELP1/IKA1 family. In terms of assembly, homodimer. Component of the elongator complex.

It is found in the cytoplasm. Its pathway is tRNA modification; 5-methoxycarbonylmethyl-2-thiouridine-tRNA biosynthesis. Its function is as follows. Component of the elongator complex, a multiprotein complex which is required for multiple tRNA modifications, including mcm5U (5-methoxycarbonylmethyl uridine), mcm5s2U (5-methoxycarbonylmethyl-2-thiouridine), and ncm5U (5-carbamoylmethyl uridine). The elongator complex catalyzes formation of carboxymethyluridine in the wobble base at position 34 in tRNAs. ELP1 binds to tRNA, mediating interaction of the elongator complex with tRNA. The sequence is that of Elongator complex protein 1 from Schizosaccharomyces pombe (strain 972 / ATCC 24843) (Fission yeast).